The primary structure comprises 110 residues: Hydrogenase maturation factor HypA (110 aa).

H2 is a Ni(2+) binding site. Residues C70, C73, C86, and C89 each contribute to the Zn(2+) site.

The protein belongs to the HypA/HybF family.

Involved in the maturation of [NiFe] hydrogenases. Required for nickel insertion into the metal center of the hydrogenase. In Geotalea daltonii (strain DSM 22248 / JCM 15807 / FRC-32) (Geobacter daltonii), this protein is Hydrogenase maturation factor HypA.